The sequence spans 490 residues: MNLAEICDNAKKGREYALLGNYDSSMVYYQGVMQQIQRHCQSVRDPAIKGKWQQVRQELLEEYEQVKSIVSTLESFKIDKPPDFPVSCQDEPFRDPAVWPPPVPAEHRAPPQIRRPNREVRPLRKEMAGVGARGPVGRAHPISKSEKPSTSRDKDYRARGRDDKGRKNMQDGASDGEMPKFDGAGYDKDLVEALERDIVSRNPSIHWDDIADLEEAKKLLREAVVLPMWMPDFFKGIRRPWKGVLMVGPPGTGKTMLAKAVATECGTTFFNVSSSTLTSKYRGESEKLVRLLFEMARFYAPTTIFIDEIDSICSRRGTSDEHEASRRVKSELLIQMDGVGGALENDDPSKMVMVLAATNFPWDIDEALRRRLEKRIYIPLPTAKGRAELLKINLREVELDPDIQLEDIAEKIEGYSGADITNVCRDASLMAMRRRINGLSPEEIRALSKEELQMPVTKGDFELALKKIAKSVSAADLEKYEKWMVEFGSA.

Met1 bears the N-acetylmethionine mark. Residues Asp95–Ala184 are disordered. Residues Pro116–Met127 show a composition bias toward basic and acidic residues. Over residues Ala128–Ala139 the composition is skewed to low complexity. The span at Ser143 to Met169 shows a compositional bias: basic and acidic residues. A Phosphoserine modification is found at Ser174. An ATP-binding site is contributed by Gly248–Thr255.

Belongs to the AAA ATPase family. Katanin p60 subunit A1 subfamily. A-like 1 sub-subfamily. Interacts with KATNB1 and KATNBL1. Expressed in testis, restricted to Sertoli cells (at protein level).

Its subcellular location is the cytoplasm. The protein resides in the cytoskeleton. The protein localises to the spindle pole. It is found in the spindle. The enzyme catalyses n ATP + n H2O + a microtubule = n ADP + n phosphate + (n+1) alpha/beta tubulin heterodimers.. Its function is as follows. Regulates microtubule dynamics in Sertoli cells, a process that is essential for spermiogenesis and male fertility. Severs microtubules in an ATP-dependent manner, promoting rapid reorganization of cellular microtubule arrays. Has microtubule-severing activity in vitro. The polypeptide is Katanin p60 ATPase-containing subunit A-like 1 (Homo sapiens (Human)).